The sequence spans 170 residues: UPF0220 protein C8D2.02c (170 aa).

4 helical membrane passes run 23–43, 54–74, 101–121, and 136–156; these read LGVY…VDAA, LHIT…IVIV, ILFI…TVFI, and MGSA…ALWI.

It belongs to the UPF0220 family.

Its subcellular location is the membrane. The polypeptide is UPF0220 protein C8D2.02c (Schizosaccharomyces pombe (strain 972 / ATCC 24843) (Fission yeast)).